Here is a 329-residue protein sequence, read N- to C-terminus: Protoheme IX farnesyltransferase (329 aa).

7 helical membrane-spanning segments follow: residues 61-81 (LACTLGGGALAAAAAGVLNCL), 108-128 (AFLIAVALACGASLLLVAGVN), 130-150 (LAAGLSLLGLCSYVLLYTIVL), 158-178 (IVIGGVAGAIPPLVGAAAATG), 186-206 (WLFGLVMLWTPAHFWALALLL), 243-263 (LLGVLTLPSGGLFYGLMVLPF), and 284-304 (AKGLFRWSILYLFGICLLLLL).

Belongs to the UbiA prenyltransferase family. Protoheme IX farnesyltransferase subfamily.

Its subcellular location is the cell inner membrane. The enzyme catalyses heme b + (2E,6E)-farnesyl diphosphate + H2O = Fe(II)-heme o + diphosphate. The protein operates within porphyrin-containing compound metabolism; heme O biosynthesis; heme O from protoheme: step 1/1. Functionally, converts heme B (protoheme IX) to heme O by substitution of the vinyl group on carbon 2 of heme B porphyrin ring with a hydroxyethyl farnesyl side group. The protein is Protoheme IX farnesyltransferase of Synechococcus sp. (strain RCC307).